A 302-amino-acid chain; its full sequence is Nudix hydrolase 22, chloroplastic (302 aa).

Residues 1–25 constitute a chloroplast transit peptide; sequence MKSGASAASPTAKSFNFGSSRLLAL. In terms of domain architecture, Nudix hydrolase spans 73–229; the sequence is PKKAAVLICL…DSDYVIWGLT (157 aa). The Nudix box motif lies at 114-135; the sequence is KAEEHDKDDGITATREAEEEIG. Mg(2+)-binding residues include Glu129 and Glu133.

This sequence belongs to the Nudix hydrolase family. Mg(2+) is required as a cofactor. The cofactor is Mn(2+). Expressed in roots, leaves, stems and inflorescences.

Its subcellular location is the plastid. The protein resides in the chloroplast. In terms of biological role, probably mediates the hydrolysis of some nucleoside diphosphate derivatives. The protein is Nudix hydrolase 22, chloroplastic (NUDT22) of Arabidopsis thaliana (Mouse-ear cress).